The sequence spans 439 residues: UDP-N-acetylmuramoylalanine--D-glutamate ligase (439 aa).

112–118 provides a ligand contact to ATP; it reads GSNGKST.

The protein belongs to the MurCDEF family.

It is found in the cytoplasm. The enzyme catalyses UDP-N-acetyl-alpha-D-muramoyl-L-alanine + D-glutamate + ATP = UDP-N-acetyl-alpha-D-muramoyl-L-alanyl-D-glutamate + ADP + phosphate + H(+). The protein operates within cell wall biogenesis; peptidoglycan biosynthesis. Its function is as follows. Cell wall formation. Catalyzes the addition of glutamate to the nucleotide precursor UDP-N-acetylmuramoyl-L-alanine (UMA). The protein is UDP-N-acetylmuramoylalanine--D-glutamate ligase of Mannheimia succiniciproducens (strain KCTC 0769BP / MBEL55E).